The primary structure comprises 405 residues: Argininosuccinate synthase (405 aa).

Residues 10 to 18 and A37 each bind ATP; that span reads AYSGGLDTS. 2 residues coordinate L-citrulline: Y88 and S93. G118 serves as a coordination point for ATP. L-aspartate contacts are provided by T120, N124, and D125. An L-citrulline-binding site is contributed by N124. R128, S179, S188, E264, and Y276 together coordinate L-citrulline.

This sequence belongs to the argininosuccinate synthase family. Type 1 subfamily. Homotetramer.

The protein localises to the cytoplasm. The enzyme catalyses L-citrulline + L-aspartate + ATP = 2-(N(omega)-L-arginino)succinate + AMP + diphosphate + H(+). Its pathway is amino-acid biosynthesis; L-arginine biosynthesis; L-arginine from L-ornithine and carbamoyl phosphate: step 2/3. The chain is Argininosuccinate synthase from Pseudomonas entomophila (strain L48).